Here is a 294-residue protein sequence, read N- to C-terminus: Probable 2-(5''-triphosphoribosyl)-3'-dephosphocoenzyme-A synthase (294 aa).

Belongs to the CitG/MdcB family.

It catalyses the reaction 3'-dephospho-CoA + ATP = 2'-(5''-triphospho-alpha-D-ribosyl)-3'-dephospho-CoA + adenine. This is Probable 2-(5''-triphosphoribosyl)-3'-dephosphocoenzyme-A synthase from Streptococcus pyogenes serotype M3 (strain ATCC BAA-595 / MGAS315).